The chain runs to 6930 residues: Replicase polyprotein 1ab (6930 aa).

The 122-residue stretch at 10-131 folds into the CoV Nsp1 globular domain; it reads LKSMVVTTLK…DIDIQIRKYG (122 aa). The region spanning 149-175 is the BetaCoV Nsp1 C-terminal domain; the sequence is DPGPDVGPYLDFPDNCCPTKPKAKRGG. The region spanning 177-431 is the CoV Nsp2 N-terminal domain; that stretch reads VYLSDQYGFD…ELVEYLIEGI (255 aa). Zn(2+)-binding residues include Cys312, Cys315, Cys331, and Cys333. Positions 312–333 are C4; that stretch reads CSYCDYYGWTPLKDIGTVNCLC. Positions 432–644 constitute a CoV Nsp2 middle domain; it reads RVDADTLDNP…CDLLTTIMSK (213 aa). In terms of domain architecture, CoV Nsp2 C-terminal spans 646 to 772; sequence LTSVKWAGCK…LGKAFRLRGG (127 aa). One can recognise a Ubiquitin-like 1 domain in the interval 775–885; that stretch reads SKVTFGDEEV…MYFSLEDAVP (111 aa). The 168-residue stretch at 930–1097 folds into the Macro 1 domain; that stretch reads MTTPCGYTKI…LYERALATSF (168 aa). The interval 1188-1207 is disordered; the sequence is KRPPPIVPQQTVEQQPQEIS. Over residues 1195-1206 the composition is skewed to low complexity; it reads PQQTVEQQPQEI. The 125-residue stretch at 1216–1340 folds into the Macro 2 domain; the sequence is LVDVVSMSFS…LYRAYFNGVF (125 aa). The 73-residue stretch at 1345–1417 folds into the DPUP domain; that stretch reads TAVQDFVVDI…VSKARAYLET (73 aa). Positions 1423–1478 constitute a Ubiquitin-like 2 domain; it reads EPLIKVLTTVDGINYSTVLVSTAQSYRAQIGTVFCDGHDWSNKNPMPTDEGTHLYK. One can recognise a Peptidase C16 domain in the interval 1492 to 1757; the sequence is EYYGVDDSNI…RTTIDPDFSK (266 aa). Cys1533 functions as the For PL-PRO activity in the catalytic mechanism. Residues Cys1610, Cys1613, Cys1645, and Cys1647 each contribute to the Zn(2+) site. The C4-type zinc-finger motif lies at 1610–1647; sequence CEHCGVSQMVFTGTDACTFYGSVVLDDLYAPVSVVCQC. Residues His1694 and Asp1708 each act as for PL-PRO activity in the active site. The 101-residue stretch at 1770–1870 folds into the Nucleic acid-binding domain; it reads PIEVVAAPKL…PLLSTVVVNT (101 aa). In terms of domain architecture, G2M spans 1883 to 2012; it reads PVNNETSEEP…KTADFVRSTN (130 aa). The next 3 membrane-spanning stretches (helical) occupy residues 2015–2035, 2040–2060, and 2081–2101; these read SKCV…WLLV, IVKV…TCVL, and YMLY…WLSE. An HD1 region spans residues 2015–2238; sequence SKCVGLLCLF…IVIAFLWLCY (224 aa). Positions 2105–2162 constitute a 3Ecto domain; it reads PSLVTRFKYFLGIVMPCDYVLVNETGTGWLHHLCMAGMDSLDYPALRMQQHRYGSPYN. Cys2121 and Cys2138 are disulfide-bonded. The next 3 membrane-spanning stretches (helical) occupy residues 2162–2182, 2183–2203, and 2218–2238; these read NYTY…YTPA, LPIV…PIPL, and LVPF…WLCY. A Y1 region spans residues 2239 to 2329; it reads KGFLHVRYGC…QFKRPIIHTD (91 aa). The 372-residue stretch at 2239–2610 folds into the CoV Nsp3 Y domain; sequence KGFLHVRYGC…MVTPFKIIGG (372 aa). Positions 2243, 2248, 2253, 2256, 2289, 2292, 2296, and 2299 each coordinate Zn(2+). A ZF1 region spans residues 2243–2256; the sequence is HVRYGCNNVACLMC. Positions 2289-2299 are ZF2; it reads CTKHNWNCVSC. A Y2 region spans residues 2330–2425; sequence EAYYEVTSVE…LVDKRMVGVV (96 aa). The segment at 2330–2610 is coV-Y; the sequence is EAYYEVTSVE…MVTPFKIIGG (281 aa). The tract at residues 2426–2509 is Y3; that stretch reads GDDATIARAM…SCIRLCHQEG (84 aa). The tract at residues 2510–2610 is Y4; the sequence is WEWTTDSWNN…MVTPFKIIGG (101 aa). A run of 7 helical transmembrane segments spans residues 2621-2641, 2719-2739, 2865-2885, 2887-2907, 2916-2936, 2946-2966, and 2970-2990; these read LIHV…PWYI, VGTT…SVCY, AFDL…AVDI, TSIL…YYLL, YSGV…VLCL, IYAM…ACMM, and FLIM…IVVV. The segment at 2621–2990 is HD2; the sequence is LIHVFMLLVV…WVTVLYIVVV (370 aa). Residues 3007-3103 form the Nsp4C domain; sequence VQVGDLAFHS…RCSVASAALQ (97 aa). One can recognise a Peptidase C30 domain in the interval 3104 to 3409; the sequence is AGLTRMAHPS…GRQMLGVKLQ (306 aa). Residues His3144 and Cys3248 each act as for 3CL-PRO activity in the active site. Transmembrane regions (helical) follow at residues 3423–3443, 3449–3469, 3474–3494, 3517–3537, 3569–3589, 3592–3612, and 3620–3640; these read FAII…WTFV, TLLL…SLLI, TYLT…NFQY, VIGT…LLSV, VAIS…GVAC, LYAA…ILLL, and LVCY…FNLI. Positions 3423-3640 are HD3; that stretch reads FAIIFVLTIL…TCYFGVFNLI (218 aa). Residues 3700–3782 form the RdRp Nsp7 cofactor domain; the sequence is SNMTDLKCTS…SILENNSVLQ (83 aa). The region spanning 3783–3982 is the RdRp Nsp8 cofactor domain; the sequence is AVASEFSNLS…QQATSPVKLQ (200 aa). The 112-residue stretch at 3983–4094 folds into the Nsp9 ssRNA-binding domain; it reads NNELMPQTVK…GTLACTVRLH (112 aa). An ExoN/MTase coactivator domain is found at 4095–4233; that stretch reads AGSATEVASN…CSSLREINLQ (139 aa). Zn(2+)-binding residues include Cys4168, Cys4171, His4177, Cys4184, Cys4211, Cys4214, Cys4222, and Cys4224. Zinc fingers lie at residues 4168-4184 and 4211-4224; these read CLYC…SGVC and CAVC…GCPC. Positions 4239 to 4494 constitute a NiRAN domain; that stretch reads FLNRVRGTSG…AAECHVDGDF (256 aa). Residues Asn4442 and Asp4451 each coordinate Mn(2+). The 99-residue stretch at 4499–4597 folds into the Nsp12 Interface domain; it reads RVWDICKYDY…MNQDIRQHAQ (99 aa). Zn(2+) is bound by residues His4528, Cys4534, Cys4539, Cys4543, and Cys4720. The region spanning 4598–5165 is the Nsp12 RNA-dependent RNA polymerase domain; that stretch reads RLSLRELLVY…NMYMESATLQ (568 aa). A rdRp Fingers N-ter region spans residues 4600 to 4814; the sequence is SLRELLVYAA…HQKMLKSIAA (215 aa). The rdRp Palm N-ter stretch occupies residues 4815–4853; it reads ARGASVVIGTTKFYGGWNRMLRTLCEGVENPHLMGWDYP. Positions 4845–5007 constitute a RdRp catalytic domain; the sequence is PHLMGWDYPK…CYNADYAQKG (163 aa). The interval 4854 to 4912 is rdRp Fingers C-ter; that stretch reads KCDRAMPNLLRIFASLILARKHATCCNASERFYRLANECAQVLSEMVLCGGGFYVKPGG. Residues His4875, Cys4878, and Cys4879 each coordinate Zn(2+). A rdRp Palm C-ter region spans residues 4913-5048; the sequence is TSSGDSTTAY…TKGPHEFCSQ (136 aa). Active-site residues include Ser4992, Asp4993, and Asp4994. The interval 5049–5165 is rdRp Thumb; the sequence is HTMLVDMKGE…NMYMESATLQ (117 aa). A CV ZBD domain is found at 5166 to 5278; the sequence is SVGTCVVCNS…ADFNSLATCD (113 aa). Positions 5170, 5173, 5181, 5184, 5191, 5194, 5198, 5204, 5215, 5220, 5237, and 5240 each coordinate Zn(2+). One can recognise a (+)RNA virus helicase ATP-binding domain in the interval 5412–5603; the sequence is TKLVGLYPAM…MVAVGPDIFL (192 aa). 5447–5454 is a binding site for ATP; the sequence is GPPGTGKS. Residues 5604–5778 enclose the (+)RNA virus helicase C-terminal domain; sequence ATCYRCPKEI…VTVGLFKDCA (175 aa). Residues 5838–6056 form the ExoN domain; it reads LFITREQAIR…RCLAIHDCFC (219 aa). Active-site residues include Asp5856, Glu5858, and Glu5957. The Zn(2+) site is built by Cys5973, Cys5976, Cys5992, His5995, His6026, Cys6030, and His6033. Active-site residues include His6037 and Asp6042. Cys6048 contacts Zn(2+). The 232-residue stretch at 6065 to 6296 folds into the N7-MTase domain; the sequence is YPIIANELAI…NLWSTFVKLQ (232 aa). Residue 6100 to 6106 coordinates S-adenosyl-L-methionine; it reads DIGNPKA. The tract at residues 6180–6194 is gpppA-binding; it reads CNGGSLYVNQHAFHT. Zn(2+) contacts are provided by Cys6218, Cys6242, Cys6253, and His6256. Residues 6297-6357 form the Nsp15 N-terminal oligomerization domain; it reads SLENVAYNVL…NVAFELWAKR (61 aa). The AV-Nsp11N/CoV-Nsp15M domain occupies 6358-6476; sequence SVNVVPEVKL…YAMRKDGAFV (119 aa). The NendoU domain occupies 6493–6630; sequence QPRTQLEIDF…KGGKISTFYP (138 aa). Residues His6523, His6537, Lys6576, Lys6679, Asp6763, Lys6803, and Glu6836 contribute to the active site. A Nidovirus-type SAM-dependent 2'-O-MTase domain is found at 6635 to 6928; it reads KQDWKPGYSM…DIGVRGVACS (294 aa).

It belongs to the coronaviruses polyprotein 1ab family. As to quaternary structure, interacts with host PHB and PHB2. In terms of assembly, interacts with papain-like protease nsp3 and non-structural protein 6. Monomer. Homodimer. Only the homodimer shows catalytic activity. As to quaternary structure, interacts with nsp8 and nsp12 to form the replication-transcription complex (RTC): nsp12, nsp7, two subunits of nsp8, and up to two subunits of nsp13. In terms of assembly, interacts with nsp7, nsp13 and nsp12 to form the replication-transcription complex (RTC): nsp12, nsp7, two subunits of nsp8, and up to two subunits of nsp13. Interacts with nsp12. As to quaternary structure, interacts with proofreading exoribonuclease nsp14 and 2'-O-methyltransferase nsp16; these interactions enhance nsp14 and nsp16 enzymatic activities. In terms of assembly, interacts with nsp7 and nsp8 to form the replication-transcription complex (RTC): nsp12, nsp7, two subunits of nsp8, and up to two subunits of nsp13. Interacts with nsp9. Interacts with nsp8 to form the replication-transcription complex (RTC): nsp12, nsp7, two subunits of nsp8, and up to two subunits of nsp13. Mn(2+) serves as cofactor. The cofactor is Mg(2+). In terms of processing, specific enzymatic cleavages in vivo by its own proteases yield mature proteins. 3CL-PRO and PL-PRO proteinases are autocatalytically processed.

Its subcellular location is the host membrane. The protein localises to the host cytoplasm. The protein resides in the host perinuclear region. It localises to the host endoplasmic reticulum-Golgi intermediate compartment. The catalysed reaction is RNA(n) + a ribonucleoside 5'-triphosphate = RNA(n+1) + diphosphate. It carries out the reaction ATP + H2O = ADP + phosphate + H(+). The enzyme catalyses Thiol-dependent hydrolysis of ester, thioester, amide, peptide and isopeptide bonds formed by the C-terminal Gly of ubiquitin (a 76-residue protein attached to proteins as an intracellular targeting signal).. It catalyses the reaction a 5'-end (N(7)-methyl 5'-triphosphoguanosine)-ribonucleoside in mRNA + S-adenosyl-L-methionine = a 5'-end (N(7)-methyl 5'-triphosphoguanosine)-(2'-O-methyl-ribonucleoside) in mRNA + S-adenosyl-L-homocysteine + H(+). The catalysed reaction is uridylyl-uridylyl-ribonucleotide-RNA = a 3'-end uridylyl-2',3'-cyclophospho-uridine-RNA + a 5'-end dephospho-ribonucleoside-RNA. It carries out the reaction a 5'-end diphospho-ribonucleoside in mRNA + GTP + H(+) = a 5'-end (5'-triphosphoguanosine)-ribonucleoside in mRNA + diphosphate. The enzyme catalyses a 5'-end (5'-triphosphoguanosine)-ribonucleoside in mRNA + S-adenosyl-L-methionine = a 5'-end (N(7)-methyl 5'-triphosphoguanosine)-ribonucleoside in mRNA + S-adenosyl-L-homocysteine. Its function is as follows. The replicase polyprotein of coronaviruses is a multifunctional protein: it contains the activities necessary for the transcription of negative stranded RNA, leader RNA, subgenomic mRNAs and progeny virion RNA as well as proteinases responsible for the cleavage of the polyprotein into functional products. Inhibits host translation by interacting with the 40S ribosomal subunit. The nsp1-40S ribosome complex further induces an endonucleolytic cleavage near the 5'UTR of host mRNAs, targeting them for degradation. Viral mRNAs are not susceptible to nsp1-mediated endonucleolytic RNA cleavage thanks to the presence of a 5'-end leader sequence and are therefore protected from degradation. By suppressing host gene expression, nsp1 facilitates efficient viral gene expression in infected cells and evasion from host immune response. Functionally, may play a role in the modulation of host cell survival signaling pathway by interacting with host PHB and PHB2. Indeed, these two proteins play a role in maintaining the functional integrity of the mitochondria and protecting cells from various stresses. In terms of biological role, responsible for the cleavages located at the N-terminus of the replicase polyprotein. In addition, PL-PRO possesses a deubiquitinating/deISGylating activity and processes both 'Lys-48'- and 'Lys-63'-linked polyubiquitin chains from cellular substrates. Participates together with nsp4 in the assembly of virally-induced cytoplasmic double-membrane vesicles necessary for viral replication. Antagonizes innate immune induction of type I interferon by blocking the phosphorylation, dimerization and subsequent nuclear translocation of host IRF3. Also prevents host NF-kappa-B signaling. Its function is as follows. Participates in the assembly of virally-induced cytoplasmic double-membrane vesicles necessary for viral replication. Cleaves the C-terminus of replicase polyprotein at 11 sites. Recognizes substrates containing the core sequence [ILMVF]-Q-|-[SGACN]. Also able to bind an ADP-ribose-1''-phosphate (ADRP). Functionally, plays a role in the initial induction of autophagosomes from host endoplasmic reticulum. Later, limits the expansion of these phagosomes that are no longer able to deliver viral components to lysosomes. In terms of biological role, forms a hexadecamer with nsp8 (8 subunits of each) that may participate in viral replication by acting as a primase. Alternatively, may synthesize substantially longer products than oligonucleotide primers. Its function is as follows. Forms a hexadecamer with nsp7 (8 subunits of each) that may participate in viral replication by acting as a primase. Alternatively, may synthesize substantially longer products than oligonucleotide primers. Forms a primer, NSP9-pU, which is utilized by the polymerase for the initiation of RNA chains. Interacts with ribosome signal recognition particle RNA (SRP). Together with NSP8, suppress protein integration into the cell membrane, thereby disrupting host immune defenses. Functionally, plays a pivotal role in viral transcription by stimulating both nsp14 3'-5' exoribonuclease and nsp16 2'-O-methyltransferase activities. Therefore plays an essential role in viral mRNAs cap methylation. In terms of biological role, RNA-directed RNA polymerase that catalyzes the transcription of viral genomic and subgenomic RNAs. Acts in complex with nsp7 and nsp8 to transcribe both the minus and positive strands of genomic RNA. The kinase-like NiRAN domain of NSP12 attaches one or more nucleotides to the amino terminus of NSP9, forming a covalent RNA-protein intermediate that serves as transcription/replication primer. Subgenomic RNAs (sgRNAs) are formed by discontinuous transcription: The polymerase has the ability to pause at transcription-regulating sequences (TRS) and jump to the leader TRS, resulting in a major deletion. This creates a series of subgenomic RNAs that are replicated, transcribed and translated. In addition, Nsp12 is a subunit of the viral RNA capping enzyme that catalyzes the RNA guanylyltransferase reaction for genomic and sub-genomic RNAs. Subsequently, the NiRAN domain transfers RNA to GDP, and forms the core cap structure GpppA-RNA. Its function is as follows. Multi-functional protein with a zinc-binding domain in N-terminus displaying RNA and DNA duplex-unwinding activities with 5' to 3' polarity. Activity of helicase is dependent on magnesium. Plays a role in viral RNA synthesis through two distinct activities. The N7-guanine methyltransferase activity plays a role in the formation of the cap structure GpppA-RNA. The proofreading exoribonuclease reduces the sensitivity of the virus to RNA mutagens during replication. This activity acts on both ssRNA and dsRNA in a 3'-5' direction. Functionally, plays a role in viral transcription/replication and prevents the simultaneous activation of host cell dsRNA sensors, such as MDA5/IFIH1, OAS, and PKR. Acts by degrading the 5'-polyuridines generated during replication of the poly(A) region of viral genomic and subgenomic RNAs. Catalyzes a two-step reaction in which a 2'3'-cyclic phosphate (2'3'-cP) is first generated by 2'-O transesterification, which is then hydrolyzed to a 3'-phosphate (3'-P). If not degraded, poly(U) RNA would hybridize with poly(A) RNA tails and activate host dsRNA sensors. In terms of biological role, methyltransferase that mediates mRNA cap 2'-O-ribose methylation to the 5'-cap structure of viral mRNAs. N7-methyl guanosine cap is a prerequisite for binding of nsp16. Therefore plays an essential role in viral mRNAs cap methylation which is essential to evade immune system. This Bat coronavirus HKU9 (BtCoV) protein is Replicase polyprotein 1ab (rep).